Consider the following 414-residue polypeptide: Multidrug resistance protein MdtG (414 aa).

10 helical membrane-spanning segments follow: residues 14–34 (LFVT…IMPF), 56–76 (LVFS…GSLA), 89–109 (ALGM…WQFL), 113–133 (ALLG…ATQV), 144–164 (TLST…GLLA), 171–191 (PVFF…WFYV), 219–239 (ILSL…IAPI), 254–274 (LAFV…ISAP), 288–308 (ILIA…FVQT), and 376–396 (AVFC…YWCL).

This sequence belongs to the major facilitator superfamily. DHA1 family. MdtG (TC 2.A.1.2.20) subfamily.

The protein resides in the cell inner membrane. This Yersinia enterocolitica serotype O:8 / biotype 1B (strain NCTC 13174 / 8081) protein is Multidrug resistance protein MdtG.